A 278-amino-acid chain; its full sequence is Non-heme chloroperoxidase (278 aa).

The AB hydrolase-1 domain occupies 26–264; it reads PVVLIHGFPL…GAPHGLLWTH (239 aa). Active-site residues include serine 99, aspartate 229, and histidine 258.

The protein belongs to the AB hydrolase superfamily. Bacterial non-heme haloperoxidase / perhydrolase family. In terms of assembly, homodimer.

The sequence is that of Non-heme chloroperoxidase (cpo) from Kitasatospora aureofaciens (Streptomyces aureofaciens).